Reading from the N-terminus, the 626-residue chain is Mitogen-activated protein kinase kinase kinase 3 (626 aa).

The 80-residue stretch at 44 to 123 folds into the PB1 domain; that stretch reads DVRIKFEHNG…KSLRILLLSQ (80 aa). Polar residues-rich tracts occupy residues 146-155, 165-174, and 219-232; these read QSAGDINTIY, LSVSSQNPGR, and SAENSLSGSCQSLD. 2 disordered regions span residues 146–184 and 218–262; these read QSAGDINTIYQPPEPRSRHLSVSSQNPGRSSPPPGYVPE and SSAE…SDRE. Position 147 is a phosphoserine (Ser-147). Ser-166 carries the post-translational modification Phosphoserine; by SGK1. A phosphoserine mark is found at Ser-250 and Ser-312. Position 337 is a phosphoserine; by SGK1 (Ser-337). Position 340 is a phosphoserine (Ser-340). One can recognise a Protein kinase domain in the interval 362-622; it reads WRRGKLLGQG…AEELLTHHFA (261 aa). ATP is bound by residues 368 to 376 and Lys-391; that span reads LGQGAFGRV. The Proton acceptor role is filled by Asp-489.

It belongs to the protein kinase superfamily. STE Ser/Thr protein kinase family. MAP kinase kinase kinase subfamily. As to quaternary structure, binds both upstream activators and downstream substrates in multimolecular complexes. Part of a complex with MAP2K3, RAC1 and CCM2. Interacts with MAP2K5 and SPAG9. The cofactor is Mg(2+). In terms of processing, phosphorylation at Ser-166 and Ser-337 by SGK1 inhibits its activity.

The catalysed reaction is L-seryl-[protein] + ATP = O-phospho-L-seryl-[protein] + ADP + H(+). The enzyme catalyses L-threonyl-[protein] + ATP = O-phospho-L-threonyl-[protein] + ADP + H(+). Activated by phosphorylation on Thr-530. Its function is as follows. Component of a protein kinase signal transduction cascade. Mediates activation of the NF-kappa-B, AP1 and DDIT3 transcriptional regulators. This is Mitogen-activated protein kinase kinase kinase 3 (MAP3K3) from Homo sapiens (Human).